Reading from the N-terminus, the 284-residue chain is 4-hydroxy-3-methylbut-2-enyl diphosphate reductase (284 aa).

Cys12 contacts [4Fe-4S] cluster. Residues His40 and His72 each contribute to the (2E)-4-hydroxy-3-methylbut-2-enyl diphosphate site. Residues His40 and His72 each coordinate dimethylallyl diphosphate. His40 and His72 together coordinate isopentenyl diphosphate. Cys94 is a binding site for [4Fe-4S] cluster. His122 contributes to the (2E)-4-hydroxy-3-methylbut-2-enyl diphosphate binding site. His122 is a binding site for dimethylallyl diphosphate. His122 provides a ligand contact to isopentenyl diphosphate. Glu124 acts as the Proton donor in catalysis. Position 161 (Thr161) interacts with (2E)-4-hydroxy-3-methylbut-2-enyl diphosphate. Cys193 is a binding site for [4Fe-4S] cluster. 3 residues coordinate (2E)-4-hydroxy-3-methylbut-2-enyl diphosphate: Ser221, Asn223, and Ser264. Dimethylallyl diphosphate is bound by residues Ser221, Asn223, and Ser264. Isopentenyl diphosphate contacts are provided by Ser221, Asn223, and Ser264.

Belongs to the IspH family. [4Fe-4S] cluster serves as cofactor.

The catalysed reaction is isopentenyl diphosphate + 2 oxidized [2Fe-2S]-[ferredoxin] + H2O = (2E)-4-hydroxy-3-methylbut-2-enyl diphosphate + 2 reduced [2Fe-2S]-[ferredoxin] + 2 H(+). The enzyme catalyses dimethylallyl diphosphate + 2 oxidized [2Fe-2S]-[ferredoxin] + H2O = (2E)-4-hydroxy-3-methylbut-2-enyl diphosphate + 2 reduced [2Fe-2S]-[ferredoxin] + 2 H(+). It participates in isoprenoid biosynthesis; dimethylallyl diphosphate biosynthesis; dimethylallyl diphosphate from (2E)-4-hydroxy-3-methylbutenyl diphosphate: step 1/1. Its pathway is isoprenoid biosynthesis; isopentenyl diphosphate biosynthesis via DXP pathway; isopentenyl diphosphate from 1-deoxy-D-xylulose 5-phosphate: step 6/6. Its function is as follows. Catalyzes the conversion of 1-hydroxy-2-methyl-2-(E)-butenyl 4-diphosphate (HMBPP) into a mixture of isopentenyl diphosphate (IPP) and dimethylallyl diphosphate (DMAPP). Acts in the terminal step of the DOXP/MEP pathway for isoprenoid precursor biosynthesis. This is 4-hydroxy-3-methylbut-2-enyl diphosphate reductase from Dehalococcoides mccartyi (strain ATCC BAA-2266 / KCTC 15142 / 195) (Dehalococcoides ethenogenes (strain 195)).